Here is a 145-residue protein sequence, read N- to C-terminus: D-aminoacyl-tRNA deacylase (145 aa).

The Gly-cisPro motif, important for rejection of L-amino acids motif lies at glycine 137–proline 138.

Belongs to the DTD family. As to quaternary structure, homodimer.

Its subcellular location is the cytoplasm. It carries out the reaction glycyl-tRNA(Ala) + H2O = tRNA(Ala) + glycine + H(+). The enzyme catalyses a D-aminoacyl-tRNA + H2O = a tRNA + a D-alpha-amino acid + H(+). Functionally, an aminoacyl-tRNA editing enzyme that deacylates mischarged D-aminoacyl-tRNAs. Also deacylates mischarged glycyl-tRNA(Ala), protecting cells against glycine mischarging by AlaRS. Acts via tRNA-based rather than protein-based catalysis; rejects L-amino acids rather than detecting D-amino acids in the active site. By recycling D-aminoacyl-tRNA to D-amino acids and free tRNA molecules, this enzyme counteracts the toxicity associated with the formation of D-aminoacyl-tRNA entities in vivo and helps enforce protein L-homochirality. This Pseudomonas aeruginosa (strain UCBPP-PA14) protein is D-aminoacyl-tRNA deacylase.